A 229-amino-acid polypeptide reads, in one-letter code: tRNA (guanine-N(1)-)-methyltransferase (229 aa).

S-adenosyl-L-methionine contacts are provided by residues Gly-109 and 129 to 134; that span reads IGDFIL.

This sequence belongs to the RNA methyltransferase TrmD family. As to quaternary structure, homodimer.

It localises to the cytoplasm. It carries out the reaction guanosine(37) in tRNA + S-adenosyl-L-methionine = N(1)-methylguanosine(37) in tRNA + S-adenosyl-L-homocysteine + H(+). Specifically methylates guanosine-37 in various tRNAs. This Helicobacter pylori (strain Shi470) protein is tRNA (guanine-N(1)-)-methyltransferase.